Here is a 76-residue protein sequence, read N- to C-terminus: uncharacterized protein (76 aa).

A helical transmembrane segment spans residues 53 to 70 (STKLHIIWFCIFAIFIAV).

It is found in the membrane. This is an uncharacterized protein from Haemophilus influenzae (strain ATCC 51907 / DSM 11121 / KW20 / Rd).